A 465-amino-acid chain; its full sequence is MRLLVCFGFFSFTYFFSRKGTRSYFRWVSTETSNNTRSKCHKLKSESIMTTSLLSRMQIDRDLRRSTEHVEIVPQETCVHHESPDSVLTECATMSTSTHVMPNSSSTISKSATEKKTKTGSKKVTRSKKSKKTKRRSSTTVTTTTISNSKPVTPDKDKDSKDQRKQRTKRKDPFEKEWFGKECDDVTRCKVPIQEFKIAEVQLRPRIEEDQNIEVTSRDIDEADMERICKKFAKEKINPITMAEPIDEKTKILLDRVTKKPYPLKYNNEKGLLLFDERSSFYKSREKKKAEKSESNLEEDTYGQVPKLKDVQRLPPQNVFSRPGVPFWAVTLLPTEEDLVDVDPSISVGTEHLEMYHLKQVPLQTIKKSKLILNALQPLSILEDRDDIHFTPELVFSNTIRSLVHAQEMEGKRNESKSDDEGKSDKSLSFVIEKQEEFIYSRANPIETARMARRNRRSKGSSSKK.

3 disordered regions span residues 95 to 173 (STST…RKDP), 407 to 426 (QEME…KSDK), and 443 to 465 (ANPI…SSKK). A compositionally biased stretch (basic residues) spans 118 to 137 (KTGSKKVTRSKKSKKTKRRS). The span at 138–150 (STTVTTTTISNSK) shows a compositional bias: low complexity. Over residues 153–173 (TPDKDKDSKDQRKQRTKRKDP) the composition is skewed to basic and acidic residues. Positions 451 to 465 (MARRNRRSKGSSSKK) are enriched in basic residues.

This is an uncharacterized protein from Caenorhabditis elegans.